A 62-amino-acid polypeptide reads, in one-letter code: MSIIFQLVLTALVFFSFVMVVAVPVAYASPQNWDQSKPLLYVGSAIWIGLVLLVAILNFLVV.

2 helical membrane passes run 8–28 and 41–61; these read VLTA…VAYA and YVGS…NFLV.

It belongs to the PsbZ family. PSII is composed of 1 copy each of membrane proteins PsbA, PsbB, PsbC, PsbD, PsbE, PsbF, PsbH, PsbI, PsbJ, PsbK, PsbL, PsbM, PsbT, PsbX, PsbY, PsbZ, Psb30/Ycf12, peripheral proteins PsbO, CyanoQ (PsbQ), PsbU, PsbV and a large number of cofactors. It forms dimeric complexes.

Its subcellular location is the cellular thylakoid membrane. Functionally, may control the interaction of photosystem II (PSII) cores with the light-harvesting antenna, regulates electron flow through the 2 photosystem reaction centers. PSII is a light-driven water plastoquinone oxidoreductase, using light energy to abstract electrons from H(2)O, generating a proton gradient subsequently used for ATP formation. This is Photosystem II reaction center protein Z from Crocosphaera subtropica (strain ATCC 51142 / BH68) (Cyanothece sp. (strain ATCC 51142)).